Consider the following 502-residue polypeptide: Serine carboxypeptidase-like 40 (502 aa).

The signal sequence occupies residues 1–24; sequence MRKGQGYSYSVIASVLVLLCVVVS. Asn-103 and Asn-187 each carry an N-linked (GlcNAc...) asparagine glycan. 3 disulfides stabilise this stretch: Cys-136/Cys-384, Cys-293/Cys-307, and Cys-331/Cys-352. Residue Ser-229 is part of the active site. N-linked (GlcNAc...) asparagine glycans are attached at residues Asn-333 and Asn-373. The active site involves Asp-420. An N-linked (GlcNAc...) asparagine glycan is attached at Asn-436. The active site involves His-473.

Belongs to the peptidase S10 family. Expressed in roots, leaves, flowers and siliques.

It localises to the secreted. In terms of biological role, probable carboxypeptidase. In Arabidopsis thaliana (Mouse-ear cress), this protein is Serine carboxypeptidase-like 40 (SCPL40).